The following is a 342-amino-acid chain: UHRF1-like protein (342 aa).

The segment at 41 to 149 (SEATTLATPS…SHPGSEEEDI (109 aa)) is disordered. The span at 42-59 (EATTLATPSNLKTAGNQR) shows a compositional bias: polar residues. The segment covering 74–90 (NRSDSPRKRPTKDREDL) has biased composition (basic and acidic residues). Residues 115–141 (TREQVTFNSDRDTPNTPSRQIKSTHSH) are compositionally biased toward polar residues. The YDG domain maps to 168–322 (GHIPGIGVGK…LMVCRYAFKR (155 aa)). Asp218 lines the DNA pocket. The segment at 236–257 (KGTKQNPKNLRTAPQTSHQSFD) is disordered. Residues 238 to 257 (TKQNPKNLRTAPQTSHQSFD) show a composition bias toward polar residues.

The protein localises to the nucleus. Its function is as follows. Involved in the maintenance of DNA methylation. Binds hemimethylated DNA. The polypeptide is UHRF1-like protein (Cryptococcus neoformans var. grubii serotype A (strain H99 / ATCC 208821 / CBS 10515 / FGSC 9487) (Filobasidiella neoformans var. grubii)).